Consider the following 406-residue polypeptide: Lysine-specific demethylase 8 (406 aa).

Basic and acidic residues predominate over residues 143–152 (KAERSEEPFS). Residues 143 to 162 (KAERSEEPFSKKRKHDCKSE) form a disordered region. A JmjC domain is found at 270 to 406 (DQVPELKEDI…LSFSVSFWWS (137 aa)). Fe cation contacts are provided by His311 and Asp313.

The cofactor is Fe(2+).

The protein resides in the nucleus. It carries out the reaction N(6),N(6)-dimethyl-L-lysyl(36)-[histone H3] + 2 2-oxoglutarate + 2 O2 = L-lysyl(36)-[histone H3] + 2 formaldehyde + 2 succinate + 2 CO2. In terms of biological role, histone demethylase required for G2/M phase cell cycle progression. Specifically demethylates dimethylated 'Lys-36' (H3K36me2) of histone H3, an epigenetic repressive mark, thereby acting as a transcription activator. May play a role in the regulation of the circadian clock. This chain is Lysine-specific demethylase 8 (kdm8), found in Danio rerio (Zebrafish).